A 127-amino-acid polypeptide reads, in one-letter code: Fluoride-specific ion channel FluC (127 aa).

The next 4 helical transmembrane spans lie at 1–21 (MMSY…RHMV), 32–52 (EFPF…GAVV), 71–91 (TGIL…VLLY), and 96–116 (VFLA…ALLL). Positions 75 and 78 each coordinate Na(+).

The protein belongs to the fluoride channel Fluc/FEX (TC 1.A.43) family.

It localises to the cell inner membrane. The catalysed reaction is fluoride(in) = fluoride(out). Its activity is regulated as follows. Na(+) is not transported, but it plays an essential structural role and its presence is essential for fluoride channel function. Its function is as follows. Fluoride-specific ion channel. Important for reducing fluoride concentration in the cell, thus reducing its toxicity. The chain is Fluoride-specific ion channel FluC from Granulibacter bethesdensis (strain ATCC BAA-1260 / CGDNIH1).